Consider the following 316-residue polypeptide: tRNA pseudouridine synthase B (316 aa).

D38 functions as the Nucleophile in the catalytic mechanism. Residues 238-312 enclose the PUA domain; the sequence is YPEVIVKSSA…PVCVLARQAG (75 aa).

Belongs to the pseudouridine synthase TruB family. Type 1 subfamily.

It carries out the reaction uridine(55) in tRNA = pseudouridine(55) in tRNA. Its function is as follows. Responsible for synthesis of pseudouridine from uracil-55 in the psi GC loop of transfer RNAs. The polypeptide is tRNA pseudouridine synthase B (Pelotomaculum thermopropionicum (strain DSM 13744 / JCM 10971 / SI)).